The sequence spans 248 residues: PF03932 family protein CutC (248 aa).

Belongs to the CutC family.

Its subcellular location is the cytoplasm. This chain is PF03932 family protein CutC, found in Porphyromonas gingivalis (strain ATCC BAA-308 / W83).